The chain runs to 161 residues: MADSDNDSGGHKDGGNASTREQDRFLPIANVSRIMKKALPANAKISKDAKETVQECVSEFISFITGEASDKCQREKRKTINGDDLLWAMTTLGFEDYVEPLKVYLQKYREVEGEKTTTAGRQGDKEGGGGGGGAGSGSGGAPMYGGGMVTTMGHQFSHHFS.

The tract at residues 1–23 (MADSDNDSGGHKDGGNASTREQD) is disordered. Residue Ala2 is modified to N-acetylalanine. The span at 8-23 (SGGHKDGGNASTREQD) shows a compositional bias: basic and acidic residues. A DNA-binding region spans residues 26–32 (LPIANVS). The tract at residues 53–64 (VQECVSEFISFI) is subunit association domain (SAD). Positions 114–146 (EKTTTAGRQGDKEGGGGGGGAGSGSGGAPMYGG) are disordered. The span at 128 to 146 (GGGGGGAGSGSGGAPMYGG) shows a compositional bias: gly residues.

The protein belongs to the NFYB/HAP3 subunit family. As to quaternary structure, heterotrimeric transcription factor composed of three components, NF-YA, NF-YB and NF-YC. NF-YB and NF-YC must interact and dimerize for NF-YA association and DNA binding. Component of a heat stress-inducible transcriptional complex with NF-YA and NF-YB subunits made, at least, of NFYA2, NFYB3 and DPB3-1 in cooperation with DREB2A. Binds directly with DPB3-1. As to expression, ubiquitous. Expressed in seedlings, petioles, hypocotyls, reproductive organ tissues and leaves.

The protein localises to the nucleus. Its subcellular location is the cytoplasm. The protein resides in the cytosol. In terms of biological role, component of the NF-Y/HAP transcription factor complex. The NF-Y complex stimulates the transcription of various genes by recognizing and binding to a CCAAT motif in promoters. Promotes the expression of heat stress-inducible genes by contributing to the formation of a heat stress-specific transcriptional complex with NF-Y subunits (e.g. DPB3-1, NF-YA2 and NF-YB3) and DREB2A at the promoter of target genes, thus promoting heat tolerance. This chain is Nuclear transcription factor Y subunit B-3, found in Arabidopsis thaliana (Mouse-ear cress).